A 208-amino-acid chain; its full sequence is Outer-membrane lipoprotein carrier protein (208 aa).

The signal sequence occupies residues 1 to 21 (MKKLNTLLLVLGSLVATPSFA). The interval 188-208 (KSTFEFTPPEGVEIDDQSNGE) is disordered. Over residues 199–208 (VEIDDQSNGE) the composition is skewed to acidic residues.

The protein belongs to the LolA family. As to quaternary structure, monomer.

The protein resides in the periplasm. Participates in the translocation of lipoproteins from the inner membrane to the outer membrane. Only forms a complex with a lipoprotein if the residue after the N-terminal Cys is not an aspartate (The Asp acts as a targeting signal to indicate that the lipoprotein should stay in the inner membrane). The sequence is that of Outer-membrane lipoprotein carrier protein from Pseudoalteromonas translucida (strain TAC 125).